Consider the following 82-residue polypeptide: Turripeptide IX-04 (82 aa).

An N-terminal signal peptide occupies residues 1 to 21 (MGFYMLLTVALLLTSLMNVEA). The propeptide occupies 22-39 (TPVDQAERSALEKSGLGN). Cystine bridges form between Cys48–Cys70, Cys55–Cys74, and Cys60–Cys81.

Expressed by the venom duct.

It localises to the secreted. In Gemmula speciosa (Splendid gem-turris), this protein is Turripeptide IX-04.